We begin with the raw amino-acid sequence, 547 residues long: Chaperonin GroEL (547 aa).

Residues 30 to 33 (TLGP), lysine 51, 87 to 91 (DGTTT), glycine 415, and aspartate 495 contribute to the ATP site. A disordered region spans residues 525–547 (PDEKEAGGGAPDMGGMGGMGGMM). The span at 531 to 547 (GGGAPDMGGMGGMGGMM) shows a compositional bias: gly residues.

The protein belongs to the chaperonin (HSP60) family. As to quaternary structure, forms a cylinder of 14 subunits composed of two heptameric rings stacked back-to-back. Interacts with the co-chaperonin GroES.

Its subcellular location is the cytoplasm. The catalysed reaction is ATP + H2O + a folded polypeptide = ADP + phosphate + an unfolded polypeptide.. Together with its co-chaperonin GroES, plays an essential role in assisting protein folding. The GroEL-GroES system forms a nano-cage that allows encapsulation of the non-native substrate proteins and provides a physical environment optimized to promote and accelerate protein folding. This Chromohalobacter salexigens (strain ATCC BAA-138 / DSM 3043 / CIP 106854 / NCIMB 13768 / 1H11) protein is Chaperonin GroEL.